The chain runs to 891 residues: Protein kinase kin1 (891 aa).

The tract at residues 65 to 116 (GYISPSSQSPHHGPVRSPSSRKPLPASPSRTRDHSLRVPVSGHSYSADEKPR) is disordered. The Protein kinase domain maps to 125–395 (YVLGKTIGAG…LEEVLNHPWM (271 aa)). ATP is bound by residues 131–139 (IGAGSMGKV) and lysine 154. Aspartate 266 functions as the Proton acceptor in the catalytic mechanism. Phosphothreonine is present on threonine 528. Disordered regions lie at residues 528 to 699 (TPVS…RNNR), 728 to 747 (TMGN…TDKL), and 805 to 841 (TPTK…LDDN). Low complexity-rich tracts occupy residues 529–538 (PVSSVPSSPV) and 583–603 (HSPS…IFRR). Phosphoserine is present on residues serine 535 and serine 536. Composition is skewed to polar residues over residues 612–629 (KSST…TSQS), 649–659 (LVTQSAIGRST), 669–699 (ISSQ…RNNR), 728–742 (TMGN…SPSK), and 820–829 (YGSNSTTDSY). Residues 842–891 (GESPASNLAFEIYIVKVPILSLRGVSFHRISGNSWQYKTLASRILNELKL) form the KA1 domain.

The protein belongs to the protein kinase superfamily. Ser/Thr protein kinase family.

It is found in the cytoplasm. It catalyses the reaction L-seryl-[protein] + ATP = O-phospho-L-seryl-[protein] + ADP + H(+). The enzyme catalyses L-threonyl-[protein] + ATP = O-phospho-L-threonyl-[protein] + ADP + H(+). Its function is as follows. Has a role in establishing the characteristic rod cell shape. Important for cell polarity and is involved in directing growth to the cell ends. The protein is Protein kinase kin1 (kin1) of Schizosaccharomyces pombe (strain 972 / ATCC 24843) (Fission yeast).